The primary structure comprises 369 residues: Porphobilinogen deaminase, chloroplastic (369 aa).

The transit peptide at 1–46 (MEMTLYSSSSFSLPSAPSNPSLSLFTSSFRFSSFKTSPFSKCRIRA) directs the protein to the chloroplast. Cysteine 303 carries the post-translational modification S-(dipyrrolylmethanemethyl)cysteine.

Belongs to the HMBS family. It depends on dipyrromethane as a cofactor.

Its subcellular location is the plastid. The protein localises to the chloroplast. The enzyme catalyses 4 porphobilinogen + H2O = hydroxymethylbilane + 4 NH4(+). It participates in porphyrin-containing compound metabolism; protoporphyrin-IX biosynthesis; coproporphyrinogen-III from 5-aminolevulinate: step 2/4. It functions in the pathway porphyrin-containing compound metabolism; chlorophyll biosynthesis. Its function is as follows. Tetrapolymerization of the monopyrrole PBG into the hydroxymethylbilane pre-uroporphyrinogen in several discrete steps. This Pisum sativum (Garden pea) protein is Porphobilinogen deaminase, chloroplastic (HEMC).